The sequence spans 441 residues: Ribulose bisphosphate carboxylase large chain (441 aa).

Positions 89 and 139 each coordinate substrate. Lys-141 functions as the Proton acceptor in the catalytic mechanism. Lys-143 serves as a coordination point for substrate. Positions 167, 169, and 170 each coordinate Mg(2+). Lys-167 carries the post-translational modification N6-carboxylysine. His-260 (proton acceptor) is an active-site residue. Residues Arg-261, His-293, and Ser-345 each coordinate substrate.

The protein belongs to the RuBisCO large chain family. Type I subfamily. As to quaternary structure, heterohexadecamer of 8 large chains and 8 small chains; disulfide-linked. The disulfide link is formed within the large subunit homodimers. Mg(2+) serves as cofactor. The disulfide bond which can form in the large chain dimeric partners within the hexadecamer appears to be associated with oxidative stress and protein turnover.

Its subcellular location is the plastid. It localises to the chloroplast. It carries out the reaction 2 (2R)-3-phosphoglycerate + 2 H(+) = D-ribulose 1,5-bisphosphate + CO2 + H2O. It catalyses the reaction D-ribulose 1,5-bisphosphate + O2 = 2-phosphoglycolate + (2R)-3-phosphoglycerate + 2 H(+). Its function is as follows. RuBisCO catalyzes two reactions: the carboxylation of D-ribulose 1,5-bisphosphate, the primary event in carbon dioxide fixation, as well as the oxidative fragmentation of the pentose substrate in the photorespiration process. Both reactions occur simultaneously and in competition at the same active site. The polypeptide is Ribulose bisphosphate carboxylase large chain (Fouquieria splendens (Ocotillo)).